We begin with the raw amino-acid sequence, 233 residues long: Octanoyltransferase (233 aa).

In terms of domain architecture, BPL/LPL catalytic spans 34–212 (PDRPDVLLLL…AFAQTFELDL (179 aa)). Residues 76-83 (RGGEVTHH), 143-145 (AIG), and 156-158 (GFA) contribute to the substrate site. Catalysis depends on Cys174, which acts as the Acyl-thioester intermediate.

The protein belongs to the LipB family.

It is found in the cytoplasm. It catalyses the reaction octanoyl-[ACP] + L-lysyl-[protein] = N(6)-octanoyl-L-lysyl-[protein] + holo-[ACP] + H(+). It participates in protein modification; protein lipoylation via endogenous pathway; protein N(6)-(lipoyl)lysine from octanoyl-[acyl-carrier-protein]: step 1/2. In terms of biological role, catalyzes the transfer of endogenously produced octanoic acid from octanoyl-acyl-carrier-protein onto the lipoyl domains of lipoate-dependent enzymes. Lipoyl-ACP can also act as a substrate although octanoyl-ACP is likely to be the physiological substrate. This Synechococcus elongatus (strain ATCC 33912 / PCC 7942 / FACHB-805) (Anacystis nidulans R2) protein is Octanoyltransferase.